We begin with the raw amino-acid sequence, 95 residues long: Aspartyl/glutamyl-tRNA(Asn/Gln) amidotransferase subunit C (95 aa).

The protein belongs to the GatC family. As to quaternary structure, heterotrimer of A, B and C subunits.

The enzyme catalyses L-glutamyl-tRNA(Gln) + L-glutamine + ATP + H2O = L-glutaminyl-tRNA(Gln) + L-glutamate + ADP + phosphate + H(+). The catalysed reaction is L-aspartyl-tRNA(Asn) + L-glutamine + ATP + H2O = L-asparaginyl-tRNA(Asn) + L-glutamate + ADP + phosphate + 2 H(+). Functionally, allows the formation of correctly charged Asn-tRNA(Asn) or Gln-tRNA(Gln) through the transamidation of misacylated Asp-tRNA(Asn) or Glu-tRNA(Gln) in organisms which lack either or both of asparaginyl-tRNA or glutaminyl-tRNA synthetases. The reaction takes place in the presence of glutamine and ATP through an activated phospho-Asp-tRNA(Asn) or phospho-Glu-tRNA(Gln). The protein is Aspartyl/glutamyl-tRNA(Asn/Gln) amidotransferase subunit C of Maricaulis maris (strain MCS10) (Caulobacter maris).